Reading from the N-terminus, the 170-residue chain is Probable peptide methionine sulfoxide reductase (170 aa).

The protein belongs to the MsrA Met sulfoxide reductase family.

The protein resides in the cytoplasm. It localises to the nucleus. The catalysed reaction is L-methionyl-[protein] + [thioredoxin]-disulfide + H2O = L-methionyl-(S)-S-oxide-[protein] + [thioredoxin]-dithiol. The enzyme catalyses [thioredoxin]-disulfide + L-methionine + H2O = L-methionine (S)-S-oxide + [thioredoxin]-dithiol. Functionally, has an important function as a repair enzyme for proteins that have been inactivated by oxidation. Catalyzes the reversible oxidation-reduction of methionine sulfoxide in proteins to methionine. The sequence is that of Probable peptide methionine sulfoxide reductase (mxr1) from Schizosaccharomyces pombe (strain 972 / ATCC 24843) (Fission yeast).